A 715-amino-acid polypeptide reads, in one-letter code: Zinc finger protein 544 (715 aa).

One can recognise a KRAB domain in the interval 14 to 85 (VCFEDVAMAF…EQEAPRDWKA (72 aa)). Residues Lys273 and Lys289 each participate in a glycyl lysine isopeptide (Lys-Gly) (interchain with G-Cter in SUMO2) cross-link. Residues 354–374 (SVCNQCGKSFSCCKLIHQRTH) form a C2H2-type 1; atypical zinc finger. C2H2-type zinc fingers lie at residues 380-402 (FECTQCGKSFSQSYDLVIHQRTH), 408-430 (YECDLCGKSFTQRSKLITHQRIH), 436-458 (YQCIECRKSFRWNSNLIVHQRIH), 464-486 (YECTHCGKSFSQSYELVTHKRTH), 492-514 (FKCTQCGKSFSQKYDLVVHQRTH), 520-542 (YECNLCGKSFSQSSKLITHQRIH), 548-570 (YQCIECGKSFRWNSNLVIHQRIH), 576-598 (YDCTHCGKSFSQSYQLVAHKRTH), 604-626 (YECNECGKAFNRSTQLIRHLQIH), 632-654 (YKCNQCNKAFARSSYLVMHQRTH), 660-682 (FECSQCGKAFSGSSNLLSHHRIH), and 688-710 (YECSDCGKSFRQQSQLVVHRRTH). Lys534 participates in a covalent cross-link: Glycyl lysine isopeptide (Lys-Gly) (interchain with G-Cter in SUMO2).

It belongs to the krueppel C2H2-type zinc-finger protein family.

It localises to the nucleus. Its function is as follows. May be involved in transcriptional regulation. This Homo sapiens (Human) protein is Zinc finger protein 544 (ZNF544).